The sequence spans 499 residues: Thioredoxin reductase 1, cytoplasmic (499 aa).

FAD contacts are provided by residues 22–23, 42–43, 58–59, and 63–67; these read SG, DF, TC, and GCIPK. A disulfide bond links C59 and C64. Residue K68 is modified to N6-succinyllysine. At Y131 the chain carries Phosphotyrosine. FAD contacts are provided by residues 131–132 and T161; that span reads YG. Residues R166, 198–204, 221–222, R226, 226–228, 292–293, and K315 each bind NADP(+); these read ASYVALE, RS, RGF, and GR. Y200 provides a ligand contact to FAD. Residues D334, 341 to 343, and H472 each bind FAD; that span reads ELT. E341 is a binding site for NADP(+). Residue H472 is the Proton acceptor of the active site. The cysteinyl-selenocysteine (Cys-Sec) cross-link spans 497–498; the sequence is CU. Residue U498 is a non-standard amino acid, selenocysteine.

This sequence belongs to the class-I pyridine nucleotide-disulfide oxidoreductase family. In terms of assembly, homodimer. FAD is required as a cofactor. Post-translationally, ISGylated.

The protein localises to the cytoplasm. It carries out the reaction [thioredoxin]-dithiol + NADP(+) = [thioredoxin]-disulfide + NADPH + H(+). It catalyses the reaction H2O2 + NADPH + H(+) = NADP(+) + 2 H2O. Its function is as follows. Reduces disulfideprotein thioredoxin (Trx) to its dithiol-containing form. Homodimeric flavoprotein involved in the regulation of cellular redox reactions, growth and differentiation. Contains a selenocysteine residue at the C-terminal active site that is essential for catalysis. Also has reductase activity on hydrogen peroxide (H2O2). The chain is Thioredoxin reductase 1, cytoplasmic (TXNRD1) from Bos taurus (Bovine).